A 146-amino-acid chain; its full sequence is Hemoglobin subunit beta (146 aa).

The Globin domain maps to 2 to 146 (HWTAEEKQLI…VAHALARKYH (145 aa)). Heme b-binding residues include histidine 63 and histidine 92.

This sequence belongs to the globin family. As to quaternary structure, heterotetramer of two alpha chains and two beta chains. In terms of tissue distribution, red blood cells.

In terms of biological role, involved in oxygen transport from the lung to the various peripheral tissues. This chain is Hemoglobin subunit beta (HBB), found in Phalacrocorax carbo (Great cormorant).